The following is a 62-amino-acid chain: Conotoxin Pn-B02 (62 aa).

A signal peptide spans 1–19 (MRCLPVFIILLLLIASAPS). Positions 20–49 (FDALPKTEDNVPLSSFHDNLKRTRRIHLNI) are excised as a propeptide. Residue Ala-61 is modified to Alanine amide.

It belongs to the conotoxin T superfamily. Contains 2 disulfide bonds that can be either 'C1-C3, C2-C4' or 'C1-C4, C2-C3', since these disulfide connectivities have been observed for conotoxins with cysteine framework V (for examples, see AC P0DQQ7 and AC P81755). In terms of tissue distribution, expressed by the venom duct.

Its subcellular location is the secreted. The polypeptide is Conotoxin Pn-B02 (Conus pennaceus (Feathered cone)).